The sequence spans 468 residues: ERO1-like protein alpha (468 aa).

The signal sequence occupies residues M1–G23. 8 cysteine pairs are disulfide-bonded: C35–C48, C37–C46, C85–C391, C94–C99, C94–C131, C99–C104, C208–C241, and C394–C397. Phosphoserine occurs at positions 106, 143, and 145. The FAD site is built by R187, T189, and W200. S252 and H255 together coordinate FAD. An N-linked (GlcNAc...) asparagine glycan is attached at N280. Residues R287 and R300 each contribute to the FAD site. N-linked (GlcNAc...) asparagine glycosylation is present at N384.

The protein belongs to the EROs family. In terms of assembly, predominantly monomer. May function both as a monomer and a homodimer. Interacts with PDILT. Interacts with ERP44; the interaction results in retention of ERO1A in the endoplasmic reticulum. FAD is required as a cofactor. In terms of processing, the Cys-94/Cys-99 and Cys-394/Cys-397 disulfide bonds constitute the redox-active center. The Cys-94/Cys-99 disulfide bond may accept electron from P4HB and funnel them to the active site disulfide Cys-394/Cys-397. The regulatory Cys-99/Cys-104 disulfide bond stabilizes the other regulatory bond Cys-94/Cys-131. Post-translationally, phosphorylated on Ser-145 by FAM20C in the Golgi which increases its enzymatic activity. Phosphorylation is induced by lactation. It is also induced by hypoxia and reductive stress.

The protein resides in the endoplasmic reticulum membrane. It is found in the golgi apparatus lumen. Its subcellular location is the secreted. It localises to the cell projection. The protein localises to the dendrite. With respect to regulation, enzyme activity is tightly regulated to prevent the accumulation of reactive oxygen species in the endoplasmic reticulum. Reversibly down-regulated by the formation of disulfide bonds between the active site Cys-94 and Cys-131, and between Cys-99 and Cys-104. Glutathione may be required to regulate its activity in the endoplasmic reticulum. In terms of biological role, oxidoreductase involved in disulfide bond formation in the endoplasmic reticulum. Efficiently reoxidizes P4HB/PDI, the enzyme catalyzing protein disulfide formation, in order to allow P4HB to sustain additional rounds of disulfide formation. Following P4HB reoxidation, passes its electrons to molecular oxygen via FAD, leading to the production of reactive oxygen species (ROS) in the cell. Required for the proper folding of immunoglobulins. Plays an important role in ER stress-induced, CHOP-dependent apoptosis by activating the inositol 1,4,5-trisphosphate receptor IP3R1. This Sus scrofa (Pig) protein is ERO1-like protein alpha.